The sequence spans 88 residues: Small ribosomal subunit protein bS18B (88 aa).

It belongs to the bacterial ribosomal protein bS18 family. In terms of assembly, part of the 30S ribosomal subunit. Forms a tight heterodimer with protein bS6.

Its function is as follows. Binds as a heterodimer with protein bS6 to the central domain of the 16S rRNA, where it helps stabilize the platform of the 30S subunit. The chain is Small ribosomal subunit protein bS18B (rpsR2) from Mycobacterium bovis (strain ATCC BAA-935 / AF2122/97).